Reading from the N-terminus, the 502-residue chain is Histidine--tRNA ligase (502 aa).

It belongs to the class-II aminoacyl-tRNA synthetase family. Homodimer.

The protein localises to the cytoplasm. The enzyme catalyses tRNA(His) + L-histidine + ATP = L-histidyl-tRNA(His) + AMP + diphosphate + H(+). The sequence is that of Histidine--tRNA ligase from Brucella ovis (strain ATCC 25840 / 63/290 / NCTC 10512).